The primary structure comprises 264 residues: TLC domain-containing protein 2 (264 aa).

The next 6 membrane-spanning stretches (helical) occupy residues 3–23 (PTGL…HWGL), 42–62 (LCVS…GLSL), 77–97 (WALV…ADLL), 114–134 (VVVS…FSMV), 169–189 (SLAT…LWLF), and 199–219 (LVTL…ILGI). A TLC domain is found at 34-227 (RDRWQWWNLC…GIRILVNDVL (194 aa)). Residues 230–264 (RPHPPSPGHEKTRGTRTRRDNGPVTSNSSTLSLKD) are disordered. The segment covering 237 to 250 (GHEKTRGTRTRRDN) has biased composition (basic and acidic residues). A compositionally biased stretch (polar residues) spans 252–264 (PVTSNSSTLSLKD).

This sequence belongs to the TLCD family.

The protein localises to the cell membrane. Functionally, regulates the composition and fluidity of the plasma membrane. Inhibits the incorporation of membrane-fluidizing phospholipids containing omega-3 long-chain polyunsaturated fatty acids (LCPUFA) and thereby promotes membrane rigidity. Does not appear to have any effect on LCPUFA synthesis. The chain is TLC domain-containing protein 2 (TLCD2) from Homo sapiens (Human).